The following is a 271-amino-acid chain: Urease accessory protein UreD (271 aa).

This sequence belongs to the UreD family. As to quaternary structure, ureD, UreF and UreG form a complex that acts as a GTP-hydrolysis-dependent molecular chaperone, activating the urease apoprotein by helping to assemble the nickel containing metallocenter of UreC. The UreE protein probably delivers the nickel.

It is found in the cytoplasm. Its function is as follows. Required for maturation of urease via the functional incorporation of the urease nickel metallocenter. This Haemophilus influenzae (strain 86-028NP) protein is Urease accessory protein UreD.